A 277-amino-acid polypeptide reads, in one-letter code: Coiled-coil domain-containing protein 117 (277 aa).

The disordered stretch occupies residues 22–69 (SPPAFAGRAFPPGAAGHDLAPRPGVRGPPSSPDGRTARGRVSIHCRKK). Positions 23 to 55 (PPAFAGRAFPPGAAGHDLAPRPGVRGPPSSPDG) are enriched in low complexity. An Omega-N-methylarginine modification is found at Arg-47. Phosphoserine is present on Ser-52. Basic residues predominate over residues 58 to 69 (ARGRVSIHCRKK). Residues 139 to 166 (QCEVARRRLQEIEDRIIDEDEEVESDRN) adopt a coiled-coil conformation. Disordered stretches follow at residues 216–242 (LSEK…ATGT) and 255–277 (QCTD…EMEL). The span at 225–242 (NPKNYMGESQTKHTATGT) shows a compositional bias: polar residues.

As to quaternary structure, interacts with CIAO2B; the interaction is direct. Interacts with MMS19; the interaction is indirect.

Its subcellular location is the cytoplasm. The protein localises to the cytoskeleton. It localises to the spindle. It is found in the nucleus. Facilitates DNA repair, cell cycle progression, and cell proliferation through its interaction with CIAO2B. The protein is Coiled-coil domain-containing protein 117 of Rattus norvegicus (Rat).